A 194-amino-acid chain; its full sequence is 7-methyl-GTP pyrophosphatase (194 aa).

Aspartate 69 serves as the catalytic Proton acceptor.

This sequence belongs to the Maf family. YceF subfamily. It depends on a divalent metal cation as a cofactor.

It is found in the cytoplasm. The catalysed reaction is N(7)-methyl-GTP + H2O = N(7)-methyl-GMP + diphosphate + H(+). Nucleoside triphosphate pyrophosphatase that hydrolyzes 7-methyl-GTP (m(7)GTP). May have a dual role in cell division arrest and in preventing the incorporation of modified nucleotides into cellular nucleic acids. The protein is 7-methyl-GTP pyrophosphatase of Sodalis glossinidius (strain morsitans).